Here is a 301-residue protein sequence, read N- to C-terminus: Quinolinate synthase (301 aa).

The iminosuccinate site is built by His-21 and Ser-38. Cys-83 provides a ligand contact to [4Fe-4S] cluster. Residues 109–111 (YIN) and Ser-126 each bind iminosuccinate. Cys-169 provides a ligand contact to [4Fe-4S] cluster. Residues 195–197 (HPE) and Thr-212 each bind iminosuccinate. Residue Cys-257 participates in [4Fe-4S] cluster binding.

The protein belongs to the quinolinate synthase family. Type 2 subfamily. Requires [4Fe-4S] cluster as cofactor.

It is found in the cytoplasm. The catalysed reaction is iminosuccinate + dihydroxyacetone phosphate = quinolinate + phosphate + 2 H2O + H(+). Its pathway is cofactor biosynthesis; NAD(+) biosynthesis; quinolinate from iminoaspartate: step 1/1. Functionally, catalyzes the condensation of iminoaspartate with dihydroxyacetone phosphate to form quinolinate. The protein is Quinolinate synthase of Clostridium perfringens (strain 13 / Type A).